The following is a 366-amino-acid chain: Putative zinc metalloprotease slr1821 (366 aa).

Residue histidine 20 participates in Zn(2+) binding. The active site involves glutamate 21. Histidine 24 contacts Zn(2+). 3 helical membrane passes run 95 to 115 (AIVI…LLIG), 293 to 313 (AVIN…FLLI), and 325 to 345 (FQMG…VFLI). In terms of domain architecture, PDZ spans 106–188 (LVFAYFLLIG…VPITVEVQRG (83 aa)).

Belongs to the peptidase M50B family. Zn(2+) serves as cofactor.

Its subcellular location is the cell inner membrane. This is Putative zinc metalloprotease slr1821 from Synechocystis sp. (strain ATCC 27184 / PCC 6803 / Kazusa).